A 37-amino-acid polypeptide reads, in one-letter code: Antifungal protein 4 (37 aa).

It localises to the secreted. Possesses antifungal activity against P.infestans but not F.graminearum. The sequence is that of Antifungal protein 4 from Malva parviflora (Little mallow).